We begin with the raw amino-acid sequence, 73 residues long: uncharacterized protein (73 aa).

It belongs to the asfivirus I73R family.

The protein resides in the virion. This is an uncharacterized protein from Ornithodoros (relapsing fever ticks).